A 156-amino-acid polypeptide reads, in one-letter code: Small ribosomal subunit protein uS7 (156 aa).

It belongs to the universal ribosomal protein uS7 family. As to quaternary structure, part of the 30S ribosomal subunit. Contacts proteins S9 and S11.

Its function is as follows. One of the primary rRNA binding proteins, it binds directly to 16S rRNA where it nucleates assembly of the head domain of the 30S subunit. Is located at the subunit interface close to the decoding center, probably blocks exit of the E-site tRNA. This chain is Small ribosomal subunit protein uS7, found in Hamiltonella defensa subsp. Acyrthosiphon pisum (strain 5AT).